Reading from the N-terminus, the 304-residue chain is m7GpppX diphosphatase (304 aa).

Substrate is bound by residues Glu152, Lys174, and 235–246 (HYLPSYYHLHVH). The Histidine triad motif signature appears at 242–246 (HLHVH). His244 functions as the Nucleophile in the catalytic mechanism.

The protein belongs to the HIT family.

It is found in the cytoplasm. The protein localises to the nucleus. It carries out the reaction a 5'-end (N(7)-methyl 5'-triphosphoguanosine)-ribonucleoside in mRNA + H2O = N(7)-methyl-GMP + a 5'-end diphospho-ribonucleoside in mRNA + 2 H(+). In terms of biological role, decapping scavenger enzyme that catalyzes the cleavage of a residual cap structure following the degradation of mRNAs by the 3'-&gt;5' exosome-mediated mRNA decay pathway. Hydrolyzes cap analog structures like 7-methylguanosine nucleoside triphosphate (m7GpppG) with up to 10 nucleotide substrates (small capped oligoribonucleotides) and specifically releases 5'-phosphorylated RNA fragments and 7-methylguanosine monophosphate (m7GMP). Has no activity towards mRNA molecules longer than 25 nucleotides. May also play a role in the 5'-&gt;3 mRNA decay pathway; m7GDP, the downstream product released by the 5'-&gt;3' mRNA mediated decapping activity, may be also converted by DCS1 to m7GMP. Inhibits mRNA translation. Binds to the m7GpppG cap analog. This chain is m7GpppX diphosphatase (nhm1), found in Schizosaccharomyces pombe (strain 972 / ATCC 24843) (Fission yeast).